The chain runs to 475 residues: 7-dehydrocholesterol reductase (475 aa).

The segment at 1 to 21 (MAAKSQPSAPKTKSTSGLTNG) is disordered. A Phosphoserine modification is found at S14. Helical transmembrane passes span 40–60 (LASV…FIMA), 151–173 (WLLT…PTII), 178–200 (IPLL…VKGY), 266–286 (VTNS…DFFW), 306–326 (LGWG…LYLV), and 331–351 (QLPT…YYIF). NADP(+) contacts are provided by residues K358, R362, L395, W400, and 407-408 (NY). Residues 420 to 440 (LACGGGHLLPYFYIIFMAILL) traverse the membrane as a helical segment. NADP(+)-binding positions include D447, 451 to 455 (CANKY), and Y462.

It belongs to the ERG4/ERG24 family. In terms of assembly, interacts with DHCR24; this interaction regulates DHCR7 activity. Interacts with TMEM147.

The protein resides in the endoplasmic reticulum membrane. It catalyses the reaction cholesterol + NADP(+) = 7-dehydrocholesterol + NADPH + H(+). It carries out the reaction 7-dehydrodesmosterol + NADPH + H(+) = desmosterol + NADP(+). The catalysed reaction is 5,6alpha-epoxy-5alpha-cholestan-3beta-ol + H2O = 5alpha-cholestane-3beta,5,6beta-triol. The enzyme catalyses 5,6beta-epoxy-5beta-cholestan-3beta-ol + H2O = 5alpha-cholestane-3beta,5,6beta-triol. The protein operates within steroid biosynthesis; cholesterol biosynthesis. Oxidoreductase that catalyzes the last step of the cholesterol synthesis pathway, which transforms cholesta-5,7-dien-3beta-ol (7-dehydrocholesterol,7-DHC) into cholesterol by reducing the C7-C8 double bond of its sterol core. Can also metabolize cholesta-5,7,24-trien-3beta-ol (7-dehydrodemosterol, 7-DHD) to desmosterol, which is then metabolized by the Delta(24)-sterol reductase (DHCR24) to cholesterol. Modulates ferroptosis (a form of regulated cell death driven by iron-dependent lipid peroxidation) through the metabolic breakdown of the anti-ferroptotic metabolites 7-DHC and 7-DHD which, when accumulated, divert the propagation of peroxyl radical-mediated damage from phospholipid components to its sterol core, protecting plasma and mitochondrial membranes from phospholipid autoxidation. In terms of biological role, component of the microsomal antiestrogen binding site (AEBS), a multiproteic complex at the ER membrane that consists of an association between cholestenol Delta-isomerase/EBP and DHCR7. This complex is responsible for cholesterol-5,6-epoxide hydrolase (ChEH) activity, which consists in the hydration of cholesterol-5,6-epoxides (5,6-EC) into cholestane-3beta,5alpha,6beta-triol (CT). The precise role of each component of this complex has not been described yet. This Bos taurus (Bovine) protein is 7-dehydrocholesterol reductase (DHCR7).